The following is a 151-amino-acid chain: Regulatory protein RecX (151 aa).

The protein belongs to the RecX family.

Its subcellular location is the cytoplasm. Its function is as follows. Modulates RecA activity. This Herminiimonas arsenicoxydans protein is Regulatory protein RecX.